A 316-amino-acid chain; its full sequence is 4-hydroxy-3-methylbut-2-enyl diphosphate reductase (316 aa).

Residue Cys12 participates in [4Fe-4S] cluster binding. Residues His41 and His74 each contribute to the (2E)-4-hydroxy-3-methylbut-2-enyl diphosphate site. Residues His41 and His74 each contribute to the dimethylallyl diphosphate site. The isopentenyl diphosphate site is built by His41 and His74. Cys96 contributes to the [4Fe-4S] cluster binding site. His124 is a (2E)-4-hydroxy-3-methylbut-2-enyl diphosphate binding site. Dimethylallyl diphosphate is bound at residue His124. Position 124 (His124) interacts with isopentenyl diphosphate. Residue Glu126 is the Proton donor of the active site. (2E)-4-hydroxy-3-methylbut-2-enyl diphosphate is bound at residue Thr169. Cys199 contributes to the [4Fe-4S] cluster binding site. 4 residues coordinate (2E)-4-hydroxy-3-methylbut-2-enyl diphosphate: Ser227, Ser228, Asn229, and Ser271. Residues Ser227, Ser228, Asn229, and Ser271 each coordinate dimethylallyl diphosphate. Isopentenyl diphosphate contacts are provided by Ser227, Ser228, Asn229, and Ser271.

This sequence belongs to the IspH family. It depends on [4Fe-4S] cluster as a cofactor.

The catalysed reaction is isopentenyl diphosphate + 2 oxidized [2Fe-2S]-[ferredoxin] + H2O = (2E)-4-hydroxy-3-methylbut-2-enyl diphosphate + 2 reduced [2Fe-2S]-[ferredoxin] + 2 H(+). It catalyses the reaction dimethylallyl diphosphate + 2 oxidized [2Fe-2S]-[ferredoxin] + H2O = (2E)-4-hydroxy-3-methylbut-2-enyl diphosphate + 2 reduced [2Fe-2S]-[ferredoxin] + 2 H(+). It functions in the pathway isoprenoid biosynthesis; dimethylallyl diphosphate biosynthesis; dimethylallyl diphosphate from (2E)-4-hydroxy-3-methylbutenyl diphosphate: step 1/1. It participates in isoprenoid biosynthesis; isopentenyl diphosphate biosynthesis via DXP pathway; isopentenyl diphosphate from 1-deoxy-D-xylulose 5-phosphate: step 6/6. Its function is as follows. Catalyzes the conversion of 1-hydroxy-2-methyl-2-(E)-butenyl 4-diphosphate (HMBPP) into a mixture of isopentenyl diphosphate (IPP) and dimethylallyl diphosphate (DMAPP). Acts in the terminal step of the DOXP/MEP pathway for isoprenoid precursor biosynthesis. This chain is 4-hydroxy-3-methylbut-2-enyl diphosphate reductase, found in Xylella fastidiosa (strain M23).